We begin with the raw amino-acid sequence, 364 residues long: UDP-N-acetylglucosamine--N-acetylmuramyl-(pentapeptide) pyrophosphoryl-undecaprenol N-acetylglucosamine transferase (364 aa).

Residues 14–16 (TGG), asparagine 126, arginine 163, serine 190, isoleucine 246, 265–270 (ALTVSE), and glutamine 291 contribute to the UDP-N-acetyl-alpha-D-glucosamine site.

The protein belongs to the glycosyltransferase 28 family. MurG subfamily.

It localises to the cell inner membrane. The catalysed reaction is di-trans,octa-cis-undecaprenyl diphospho-N-acetyl-alpha-D-muramoyl-L-alanyl-D-glutamyl-meso-2,6-diaminopimeloyl-D-alanyl-D-alanine + UDP-N-acetyl-alpha-D-glucosamine = di-trans,octa-cis-undecaprenyl diphospho-[N-acetyl-alpha-D-glucosaminyl-(1-&gt;4)]-N-acetyl-alpha-D-muramoyl-L-alanyl-D-glutamyl-meso-2,6-diaminopimeloyl-D-alanyl-D-alanine + UDP + H(+). It functions in the pathway cell wall biogenesis; peptidoglycan biosynthesis. In terms of biological role, cell wall formation. Catalyzes the transfer of a GlcNAc subunit on undecaprenyl-pyrophosphoryl-MurNAc-pentapeptide (lipid intermediate I) to form undecaprenyl-pyrophosphoryl-MurNAc-(pentapeptide)GlcNAc (lipid intermediate II). The chain is UDP-N-acetylglucosamine--N-acetylmuramyl-(pentapeptide) pyrophosphoryl-undecaprenol N-acetylglucosamine transferase from Shewanella loihica (strain ATCC BAA-1088 / PV-4).